A 239-amino-acid chain; its full sequence is Ribonuclease PH (239 aa).

Residues R86 and 124 to 126 contribute to the phosphate site; that span reads GTR.

Belongs to the RNase PH family. Homohexameric ring arranged as a trimer of dimers.

It catalyses the reaction tRNA(n+1) + phosphate = tRNA(n) + a ribonucleoside 5'-diphosphate. Functionally, phosphorolytic 3'-5' exoribonuclease that plays an important role in tRNA 3'-end maturation. Removes nucleotide residues following the 3'-CCA terminus of tRNAs; can also add nucleotides to the ends of RNA molecules by using nucleoside diphosphates as substrates, but this may not be physiologically important. Probably plays a role in initiation of 16S rRNA degradation (leading to ribosome degradation) during starvation. In Anaeromyxobacter dehalogenans (strain 2CP-1 / ATCC BAA-258), this protein is Ribonuclease PH.